A 216-amino-acid polypeptide reads, in one-letter code: Guanylate kinase (216 aa).

A Guanylate kinase-like domain is found at 11–189; that stretch reads GVLIVISGPS…AVKKIEAILL (179 aa). 18–25 provides a ligand contact to ATP; that stretch reads GPSGAGKG.

This sequence belongs to the guanylate kinase family.

It localises to the cytoplasm. The catalysed reaction is GMP + ATP = GDP + ADP. Functionally, essential for recycling GMP and indirectly, cGMP. In Clostridium perfringens (strain ATCC 13124 / DSM 756 / JCM 1290 / NCIMB 6125 / NCTC 8237 / Type A), this protein is Guanylate kinase.